A 311-amino-acid polypeptide reads, in one-letter code: Putative S-adenosyl-L-methionine-dependent methyltransferase MUL_4761 (311 aa).

S-adenosyl-L-methionine is bound by residues aspartate 132 and 161 to 162 (DL).

The protein belongs to the UPF0677 family.

Its function is as follows. Exhibits S-adenosyl-L-methionine-dependent methyltransferase activity. This chain is Putative S-adenosyl-L-methionine-dependent methyltransferase MUL_4761, found in Mycobacterium ulcerans (strain Agy99).